The sequence spans 428 residues: MLGALLLSGAVHAAVQPLDSVVAIVDNDVIMKSQMDQRVREVQQTIAKRGSGVPPAEALQPQVLDRLILENLQLQMGERSGIRVSDEELNQAIGTIAQRNNMSVEQFRAALAHDGLSYNDAREQVRREMIISRVRQRRVAERIQVSQQEVKNFLASDMGKAQLSEEFHLANILIATPDSASSDAIQAAAVKAKGIYDQLKKGADFTRLAATSSSSENALEGGDMGWRKAAQLPPPFGDMLSSMPVGDVTPPARTPGGFIILKLLEKRGGQGQAQMRDEVHVRHILIKPSEIRNEEETKRLAQKIYDRIENGEDFAELAKSFSEDPGSALNGGDLNWVDPNSLVPEFRQVMSETPQGVLSKPFQTQYGWHVLEVLGRRSTDATDQAREQQALNVLRNRKYDEELQTWLRQIRDEAYVEIKLPGATQAAQ.

The first 13 residues, 1–13 (MLGALLLSGAVHA), serve as a signal peptide directing secretion. PpiC domains lie at 164–265 (SEEF…KLLE) and 276–375 (RDEV…EVLG). The interval 211–230 (TSSSSENALEGGDMGWRKAA) is disordered.

It localises to the periplasm. It carries out the reaction [protein]-peptidylproline (omega=180) = [protein]-peptidylproline (omega=0). Chaperone involved in the correct folding and assembly of outer membrane proteins. Recognizes specific patterns of aromatic residues and the orientation of their side chains, which are found more frequently in integral outer membrane proteins. May act in both early periplasmic and late outer membrane-associated steps of protein maturation. This chain is Chaperone SurA, found in Pseudomonas syringae pv. syringae (strain B728a).